Consider the following 463-residue polypeptide: Glutamate-1-semialdehyde 2,1-aminomutase, chloroplastic (463 aa).

The transit peptide at 1–30 directs the protein to the chloroplast; sequence MQMQLNAKTVQGAFKAQRPRSVRGNVAVRA. Lys303 is modified (N6-(pyridoxal phosphate)lysine).

The protein belongs to the class-III pyridoxal-phosphate-dependent aminotransferase family. HemL subfamily. As to quaternary structure, homodimer. Pyridoxal 5'-phosphate is required as a cofactor.

It is found in the plastid. The protein localises to the chloroplast. The catalysed reaction is (S)-4-amino-5-oxopentanoate = 5-aminolevulinate. Its pathway is porphyrin-containing compound metabolism; protoporphyrin-IX biosynthesis; 5-aminolevulinate from L-glutamyl-tRNA(Glu): step 2/2. The protein operates within porphyrin-containing compound metabolism; chlorophyll biosynthesis. This chain is Glutamate-1-semialdehyde 2,1-aminomutase, chloroplastic (GSA), found in Chlamydomonas reinhardtii (Chlamydomonas smithii).